The following is a 164-amino-acid chain: Ecotin (164 aa).

A signal peptide spans 1 to 20; it reads MKMFVPAVVFAALASASAWA. A disulfide bridge links Cys-72 with Cys-109.

This sequence belongs to the protease inhibitor I11 (ecotin) family. As to quaternary structure, homodimer.

The protein localises to the periplasm. Its function is as follows. General inhibitor of pancreatic serine proteases: inhibits chymotrypsin, trypsin, elastases, factor X, kallikrein as well as a variety of other proteases. In Salmonella enteritidis PT4 (strain P125109), this protein is Ecotin.